The sequence spans 439 residues: Leukocyte immunoglobulin-like receptor subfamily A member 3 (439 aa).

The first 23 residues, 1–23 (MTPILTVLICLGLSLDPRTHVQA), serve as a signal peptide directing secretion. 4 Ig-like C2-type domains span residues 27–108 (PKPT…AGLS), 119–224 (TGAY…GVSK), 226–315 (PSLS…DPLD), and 326–415 (PFLS…SDPL). Cysteines 49 and 98 form a disulfide. N140 carries an N-linked (GlcNAc...) asparagine glycan. Disulfide bonds link C145-C197, C157-C167, and C246-C297. N281, N302, and N341 each carry an N-linked (GlcNAc...) asparagine glycan. C346 and C397 form a disulfide bridge. N-linked (GlcNAc...) asparagine glycosylation occurs at N431.

Post-translationally, N-glycosylation is required for ligand binding. As to expression, detected in B-cells, and at lower levels in natural killer (NK) cells. Detected in peripheral blood monocytes and lung.

It localises to the secreted. In terms of biological role, acts as a soluble receptor for class I MHC antigens. Binds both classical and non-classical HLA class I molecules but with reduced affinities compared to LILRB1 or LILRB2. Binds with high affinity to the surface of monocytes, leading to abolish LPS-induced TNF-alpha production by monocytes. The polypeptide is Leukocyte immunoglobulin-like receptor subfamily A member 3 (LILRA3) (Homo sapiens (Human)).